The following is a 185-amino-acid chain: Ribosome-recycling factor (185 aa).

It belongs to the RRF family.

It is found in the cytoplasm. Its function is as follows. Responsible for the release of ribosomes from messenger RNA at the termination of protein biosynthesis. May increase the efficiency of translation by recycling ribosomes from one round of translation to another. This chain is Ribosome-recycling factor, found in Aliivibrio salmonicida (strain LFI1238) (Vibrio salmonicida (strain LFI1238)).